The primary structure comprises 195 residues: Dephospho-CoA kinase (195 aa).

In terms of domain architecture, DPCK spans 2 to 195 (IISLTGGIGV…DIVDSLNLNT (194 aa)). Residue 10–15 (GVGKSF) coordinates ATP.

This sequence belongs to the CoaE family.

The protein resides in the cytoplasm. The enzyme catalyses 3'-dephospho-CoA + ATP = ADP + CoA + H(+). It participates in cofactor biosynthesis; coenzyme A biosynthesis; CoA from (R)-pantothenate: step 5/5. In terms of biological role, catalyzes the phosphorylation of the 3'-hydroxyl group of dephosphocoenzyme A to form coenzyme A. The sequence is that of Dephospho-CoA kinase from Wolbachia pipientis wMel.